A 360-amino-acid chain; its full sequence is MDLSFTTKSVKINGQNHRILLQNENGPCALLALANILILSPDHTRFSNELIRLVNKGSQISLKELIEVLADIALQVTDKPSTDISELLSLLPRLHEGLNINPEFNGSFENTKEMSIFRLFNVDVVHGWVINSFINENIDEKLSHYSYESAQRILTQAADINCGISQDENSDEVLRDAMHLGLFLNESPTQLTAFGLLRLREKLLHNKFSILFRNDHFSTLFKYEDRLYTLVTDFGYKNCKDIVWQSLDSVDGSCDAFFAGNFSAAEVNGQQLSTDIERDFGTGNLLLEEIQQIENDKELAKQLQEQEQERVTKFEAKRKIHSHKKNSEIHAPVKKDKFKRRSSLLNAKASEKEKSECVVM.

The active-site Nucleophile is the cysteine 28. Histidine 216 functions as the Proton acceptor in the catalytic mechanism. Residues 317 to 360 (KRKIHSHKKNSEIHAPVKKDKFKRRSSLLNAKASEKEKSECVVM) are disordered. Basic and acidic residues-rich tracts occupy residues 325-335 (KNSEIHAPVKK) and 349-360 (ASEKEKSECVVM).

It belongs to the MINDY deubiquitinase family. FAM63 subfamily.

The protein localises to the cytoplasm. It carries out the reaction Thiol-dependent hydrolysis of ester, thioester, amide, peptide and isopeptide bonds formed by the C-terminal Gly of ubiquitin (a 76-residue protein attached to proteins as an intracellular targeting signal).. Hydrolase that can specifically remove 'Lys-48'-linked conjugated ubiquitin from proteins. Has endodeubiquitinase activity. The protein is Ubiquitin carboxyl-terminal hydrolase MIY1 of Saccharomyces cerevisiae (strain ATCC 204508 / S288c) (Baker's yeast).